The chain runs to 106 residues: Probable NADP-dependent dehydrogenase in aabA 3'region (106 aa).

L4–I28 contacts NADP(+).

It belongs to the short-chain dehydrogenases/reductases (SDR) family.

In Dichelobacter nodosus (Bacteroides nodosus), this protein is Probable NADP-dependent dehydrogenase in aabA 3'region.